Reading from the N-terminus, the 408-residue chain is Elongation factor Tu, chloroplastic (408 aa).

The tr-type G domain occupies 10–213 (KPHVNIGTIG…KVDEYIPTPE (204 aa)). The segment at 19–26 (GHVDHGKT) is G1. 19–26 (GHVDHGKT) is a binding site for GTP. Threonine 26 serves as a coordination point for Mg(2+). The tract at residues 59–63 (GITIN) is G2. The tract at residues 80 to 83 (DCPG) is G3. GTP-binding positions include 80–84 (DCPGH) and 135–138 (NKAD). The interval 135–138 (NKAD) is G4. A G5 region spans residues 173 to 175 (SAL).

It belongs to the TRAFAC class translation factor GTPase superfamily. Classic translation factor GTPase family. EF-Tu/EF-1A subfamily.

Its subcellular location is the plastid. The protein localises to the chloroplast. The catalysed reaction is GTP + H2O = GDP + phosphate + H(+). Its function is as follows. GTP hydrolase that promotes the GTP-dependent binding of aminoacyl-tRNA to the A-site of ribosomes during protein biosynthesis. This Guillardia theta (Cryptophyte) protein is Elongation factor Tu, chloroplastic (tufA).